A 1151-amino-acid chain; its full sequence is uncharacterized protein (1151 aa).

5 disordered regions span residues 611-633 (FVKGDRSDSGGGPPPPPPPDEEE), 709-740 (NLVPVGESPMSAPDIDLPIPGLPGPQPQIMEV), 753-778 (PPILPIQPPLPLPAPPTPQEPPKSIL), 795-880 (PPVI…PPKL), and 1060-1151 (LKEP…TQQE). Pro residues-rich tracts occupy residues 754 to 773 (PILPIQPPLPLPAPPTPQEP) and 811 to 842 (IVPPSPAVVSPPSPTTIPQEPPTQPSPIPSQP). Residues 867-878 (PITPDTPAITPP) are compositionally biased toward low complexity. Residues 1082-1091 (ESDNEDDELD) are compositionally biased toward acidic residues. The span at 1131-1142 (PVDTSDATKIST) shows a compositional bias: polar residues.

This is an uncharacterized protein from Ostreid herpesvirus 1 (isolate France) (OsHV-1).